The primary structure comprises 432 residues: UDP-N-acetylmuramate--L-alanine ligase (432 aa).

G108–S114 serves as a coordination point for ATP.

This sequence belongs to the MurCDEF family.

It is found in the cytoplasm. It catalyses the reaction UDP-N-acetyl-alpha-D-muramate + L-alanine + ATP = UDP-N-acetyl-alpha-D-muramoyl-L-alanine + ADP + phosphate + H(+). The protein operates within cell wall biogenesis; peptidoglycan biosynthesis. Its function is as follows. Cell wall formation. The chain is UDP-N-acetylmuramate--L-alanine ligase from Bacillus licheniformis (strain ATCC 14580 / DSM 13 / JCM 2505 / CCUG 7422 / NBRC 12200 / NCIMB 9375 / NCTC 10341 / NRRL NRS-1264 / Gibson 46).